Consider the following 190-residue polypeptide: Peptidyl-tRNA hydrolase (190 aa).

Tyr18 provides a ligand contact to tRNA. His23 functions as the Proton acceptor in the catalytic mechanism. TRNA-binding residues include Phe67, Asn69, and Asn115.

The protein belongs to the PTH family. Monomer.

The protein localises to the cytoplasm. It catalyses the reaction an N-acyl-L-alpha-aminoacyl-tRNA + H2O = an N-acyl-L-amino acid + a tRNA + H(+). Hydrolyzes ribosome-free peptidyl-tRNAs (with 1 or more amino acids incorporated), which drop off the ribosome during protein synthesis, or as a result of ribosome stalling. Functionally, catalyzes the release of premature peptidyl moieties from peptidyl-tRNA molecules trapped in stalled 50S ribosomal subunits, and thus maintains levels of free tRNAs and 50S ribosomes. The protein is Peptidyl-tRNA hydrolase of Leptospira interrogans serogroup Icterohaemorrhagiae serovar Lai (strain 56601).